The sequence spans 836 residues: Translation initiation factor IF-2 (836 aa).

Residues 1–233 (MSDTDGKKPL…RSLAAMKRKQ (233 aa)) are disordered. Residues 18 to 27 (SGQVKQSFSH) show a composition bias toward polar residues. The segment covering 50-60 (SGSSTTTSSPS) has biased composition (low complexity). Over residues 88-156 (KLREVEDAKR…AARRAEEAKR (69 aa)) the composition is skewed to basic and acidic residues. A compositionally biased stretch (low complexity) spans 167 to 176 (PAESRASAPP). A compositionally biased stretch (basic and acidic residues) spans 185-206 (SRKEREREADRDRTTKKDDSRR). One can recognise a tr-type G domain in the interval 333–501 (PRPPIITIMG…NIALQAEILD (169 aa)). Residues 342 to 349 (GHVDHGKT) form a G1 region. 342-349 (GHVDHGKT) contributes to the GTP binding site. The interval 367-371 (GITQH) is G2. Residues 389–392 (DTPG) are G3. GTP is bound by residues 389 to 393 (DTPGH) and 443 to 446 (NKID). Residues 443 to 446 (NKID) form a G4 region. Positions 479–481 (SAK) are G5.

It belongs to the TRAFAC class translation factor GTPase superfamily. Classic translation factor GTPase family. IF-2 subfamily.

Its subcellular location is the cytoplasm. One of the essential components for the initiation of protein synthesis. Protects formylmethionyl-tRNA from spontaneous hydrolysis and promotes its binding to the 30S ribosomal subunits. Also involved in the hydrolysis of GTP during the formation of the 70S ribosomal complex. The sequence is that of Translation initiation factor IF-2 from Cereibacter sphaeroides (strain ATCC 17023 / DSM 158 / JCM 6121 / CCUG 31486 / LMG 2827 / NBRC 12203 / NCIMB 8253 / ATH 2.4.1.) (Rhodobacter sphaeroides).